The chain runs to 154 residues: Small ribosomal subunit protein uS15 (154 aa).

Basic residues predominate over residues 1–14 (MAPVPHRSRHKKGR). Residues 1–24 (MAPVPHRSRHKKGRSGSVRPAHPT) are disordered.

It belongs to the universal ribosomal protein uS15 family. Part of the 30S ribosomal subunit.

The chain is Small ribosomal subunit protein uS15 from Pyrobaculum arsenaticum (strain DSM 13514 / JCM 11321 / PZ6).